Reading from the N-terminus, the 444-residue chain is L-cysteine:1D-myo-inositol 2-amino-2-deoxy-alpha-D-glucopyranoside ligase (444 aa).

Basic and acidic residues predominate over residues 1–13 (MPCDRKTSPDQHH). The disordered stretch occupies residues 1–21 (MPCDRKTSPDQHHALQIHRHH). Cysteine 75 serves as a coordination point for Zn(2+). L-cysteinyl-5'-AMP contacts are provided by residues 75–78 (CGIT), threonine 90, and 113–115 (NIT). The short motif at 77–87 (ITPYDATHLGH) is the 'HIGH' region element. Positions 219–224 (ERGGDP) match the 'ERGGDP' region motif. An L-cysteinyl-5'-AMP-binding site is contributed by tryptophan 259. Position 263 (cysteine 263) interacts with Zn(2+). 281–283 (GSD) provides a ligand contact to L-cysteinyl-5'-AMP. Residue histidine 288 participates in Zn(2+) binding. L-cysteinyl-5'-AMP is bound at residue isoleucine 315. The short motif at 321–325 (KMSKS) is the 'KMSKS' region element.

It belongs to the class-I aminoacyl-tRNA synthetase family. MshC subfamily. Monomer. The cofactor is Zn(2+).

The catalysed reaction is 1D-myo-inositol 2-amino-2-deoxy-alpha-D-glucopyranoside + L-cysteine + ATP = 1D-myo-inositol 2-(L-cysteinylamino)-2-deoxy-alpha-D-glucopyranoside + AMP + diphosphate + H(+). In terms of biological role, catalyzes the ATP-dependent condensation of GlcN-Ins and L-cysteine to form L-Cys-GlcN-Ins. The sequence is that of L-cysteine:1D-myo-inositol 2-amino-2-deoxy-alpha-D-glucopyranoside ligase from Mycolicibacterium gilvum (strain PYR-GCK) (Mycobacterium gilvum (strain PYR-GCK)).